Reading from the N-terminus, the 84-residue chain is Perlustrin (84 aa).

An IGFBP N-terminal domain is found at 1 to 82 (LSCASCENAA…LDFKGVCARV (82 aa)). Intrachain disulfides connect Cys-3-Cys-28, Cys-6-Cys-30, Cys-11-Cys-31, Cys-18-Cys-34, Cys-42-Cys-55, and Cys-49-Cys-79.

Shell.

Binds human IGF1 and IGF2 and bovine insulin. The protein is Perlustrin of Haliotis laevigata (Smooth Australian abalone).